The following is a 742-amino-acid chain: 5-methyltetrahydropteroyltriglutamate--homocysteine methyltransferase (742 aa).

5-methyltetrahydropteroyltri-L-glutamate-binding positions include 18-21 (REWK) and K112. L-homocysteine contacts are provided by residues 420 to 422 (IGS) and E473. L-methionine-binding positions include 420-422 (IGS) and E473. W550 contacts 5-methyltetrahydropteroyltri-L-glutamate. D588 is a binding site for L-homocysteine. Position 588 (D588) interacts with L-methionine. 5-methyltetrahydropteroyltri-L-glutamate is bound at residue E594. Positions 630, 632, and 654 each coordinate Zn(2+). The active-site Proton donor is H683. C715 is a binding site for Zn(2+).

The protein belongs to the vitamin-B12 independent methionine synthase family. It depends on Zn(2+) as a cofactor.

The catalysed reaction is 5-methyltetrahydropteroyltri-L-glutamate + L-homocysteine = tetrahydropteroyltri-L-glutamate + L-methionine. Its pathway is amino-acid biosynthesis; L-methionine biosynthesis via de novo pathway; L-methionine from L-homocysteine (MetE route): step 1/1. Catalyzes the transfer of a methyl group from 5-methyltetrahydrofolate to homocysteine resulting in methionine formation. This Staphylococcus aureus (strain USA300) protein is 5-methyltetrahydropteroyltriglutamate--homocysteine methyltransferase.